The sequence spans 569 residues: Proline--tRNA ligase (569 aa).

Belongs to the class-II aminoacyl-tRNA synthetase family. ProS type 1 subfamily. As to quaternary structure, homodimer.

It localises to the cytoplasm. It carries out the reaction tRNA(Pro) + L-proline + ATP = L-prolyl-tRNA(Pro) + AMP + diphosphate. Catalyzes the attachment of proline to tRNA(Pro) in a two-step reaction: proline is first activated by ATP to form Pro-AMP and then transferred to the acceptor end of tRNA(Pro). As ProRS can inadvertently accommodate and process non-cognate amino acids such as alanine and cysteine, to avoid such errors it has two additional distinct editing activities against alanine. One activity is designated as 'pretransfer' editing and involves the tRNA(Pro)-independent hydrolysis of activated Ala-AMP. The other activity is designated 'posttransfer' editing and involves deacylation of mischarged Ala-tRNA(Pro). The misacylated Cys-tRNA(Pro) is not edited by ProRS. This is Proline--tRNA ligase from Nitrosospira multiformis (strain ATCC 25196 / NCIMB 11849 / C 71).